Reading from the N-terminus, the 55-residue chain is Large ribosomal subunit protein bL33 (55 aa).

The protein belongs to the bacterial ribosomal protein bL33 family.

The protein is Large ribosomal subunit protein bL33 of Arthrobacter sp. (strain FB24).